The following is a 276-amino-acid chain: uncharacterized protein (276 aa).

The 118-residue stretch at 20-137 (PVLIFIPGAN…PPINTFLPDS (118 aa)) folds into the AB hydrolase-1 domain.

The protein belongs to the AB hydrolase superfamily.

This is an uncharacterized protein from Staphylococcus aureus (strain MRSA252).